The chain runs to 429 residues: D-amino acid dehydrogenase 1 (429 aa).

3-17 (VLVLGSGVIGVTSAY) provides a ligand contact to FAD.

The protein belongs to the DadA oxidoreductase family. The cofactor is FAD.

It catalyses the reaction a D-alpha-amino acid + A + H2O = a 2-oxocarboxylate + AH2 + NH4(+). Functionally, oxidative deamination of D-amino acids. In Ralstonia nicotianae (strain ATCC BAA-1114 / GMI1000) (Ralstonia solanacearum), this protein is D-amino acid dehydrogenase 1 (dadA1).